Consider the following 501-residue polypeptide: Aspartate--tRNA ligase, cytoplasmic (501 aa).

Thr-52 carries the phosphothreonine modification. Lys-74 is modified (N6-acetyllysine). Residue Glu-229 coordinates L-aspartate. Phosphoserine is present on Ser-249. Positions 251-254 are aspartate; it reads QLYK. Residue Arg-273 coordinates L-aspartate. Residues 273 to 275 and 281 to 283 contribute to the ATP site; these read RAE and RHL. Position 374 is an N6-acetyllysine (Lys-374). Glu-424 contributes to the ATP binding site. L-aspartate-binding residues include Ser-427 and Arg-431. 472 to 475 is an ATP binding site; that stretch reads GLER.

This sequence belongs to the class-II aminoacyl-tRNA synthetase family. Type 2 subfamily. As to quaternary structure, homodimer. Part of a multisubunit complex that groups tRNA ligases for Arg (RARS1), Asp (DARS1), Gln (QARS1), Ile (IARS1), Leu (LARS1), Lys (KARS1), Met (MARS1) the bifunctional ligase for Glu and Pro (EPRS1) and the auxiliary subunits AIMP1/p43, AIMP2/p38 and EEF1E1/p18.

The protein localises to the cytoplasm. The catalysed reaction is tRNA(Asp) + L-aspartate + ATP = L-aspartyl-tRNA(Asp) + AMP + diphosphate. In terms of biological role, catalyzes the specific attachment of an amino acid to its cognate tRNA in a 2 step reaction: the amino acid (AA) is first activated by ATP to form AA-AMP and then transferred to the acceptor end of the tRNA. The protein is Aspartate--tRNA ligase, cytoplasmic (Dars1) of Rattus norvegicus (Rat).